Consider the following 598-residue polypeptide: Urease subunit alpha (598 aa).

The Ni(2+) site is built by His-141, His-143, and Lys-223. An N6-carboxylysine modification is found at Lys-223. A substrate-binding site is contributed by His-225. Ni(2+) contacts are provided by His-252 and His-278. The active-site Proton donor is His-326. Asp-366 contributes to the Ni(2+) binding site.

It belongs to the metallo-dependent hydrolases superfamily. Urease alpha subunit family. Heterotrimer of UreA (gamma), UreB (beta) and UreC (alpha) subunits. Three heterotrimers associate to form the active enzyme. Ni cation serves as cofactor. Post-translationally, carboxylation allows a single lysine to coordinate two nickel ions.

The protein localises to the cytoplasm. The catalysed reaction is urea + 2 H2O + H(+) = hydrogencarbonate + 2 NH4(+). It functions in the pathway nitrogen metabolism; urea degradation; CO(2) and NH(3) from urea (urease route): step 1/1. This Ureaplasma parvum serovar 3 (strain ATCC 27815 / 27 / NCTC 11736) protein is Urease subunit alpha.